The primary structure comprises 179 residues: Large ribosomal subunit protein uL5 (179 aa).

The protein belongs to the universal ribosomal protein uL5 family. As to quaternary structure, part of the 50S ribosomal subunit; part of the 5S rRNA/L5/L18/L25 subcomplex. Contacts the 5S rRNA and the P site tRNA. Forms a bridge to the 30S subunit in the 70S ribosome.

This is one of the proteins that bind and probably mediate the attachment of the 5S RNA into the large ribosomal subunit, where it forms part of the central protuberance. In the 70S ribosome it contacts protein S13 of the 30S subunit (bridge B1b), connecting the 2 subunits; this bridge is implicated in subunit movement. Contacts the P site tRNA; the 5S rRNA and some of its associated proteins might help stabilize positioning of ribosome-bound tRNAs. The sequence is that of Large ribosomal subunit protein uL5 from Nitrosospira multiformis (strain ATCC 25196 / NCIMB 11849 / C 71).